The primary structure comprises 288 residues: NAD(P)H-hydrate epimerase (288 aa).

A mitochondrion-targeting transit peptide spans 1–32 (MSGLRALLGLGLLVAGSRLSRVRVQAGSCRAG). The residue at position 49 (Ser-49) is a Phosphoserine. The 211-residue stretch at 65–275 (AQAVDQELFN…ALEKKYQLNL (211 aa)) folds into the YjeF N-terminal domain. 119–123 (NNGGD) contributes to the (6S)-NADPHX binding site. K(+) is bound at residue Asn-120. Lys-144 carries the post-translational modification N6-succinyllysine. Asp-185 contributes to the K(+) binding site. (6S)-NADPHX is bound by residues 189–195 (GFSFTGE) and Asp-218. Ser-221 contributes to the K(+) binding site.

Belongs to the NnrE/AIBP family. In terms of assembly, homodimer. Interacts with APOA1 and APOA2. It depends on K(+) as a cofactor. Undergoes physiological phosphorylation during sperm capacitation, downstream to PKA activation.

It localises to the mitochondrion. The protein resides in the secreted. The catalysed reaction is (6R)-NADHX = (6S)-NADHX. The enzyme catalyses (6R)-NADPHX = (6S)-NADPHX. Catalyzes the epimerization of the S- and R-forms of NAD(P)HX, a damaged form of NAD(P)H that is a result of enzymatic or heat-dependent hydration. This is a prerequisite for the S-specific NAD(P)H-hydrate dehydratase to allow the repair of both epimers of NAD(P)HX. Accelerates cholesterol efflux from endothelial cells to high-density lipoprotein (HDL) and thereby regulates angiogenesis. The protein is NAD(P)H-hydrate epimerase of Bos taurus (Bovine).